The chain runs to 202 residues: Peptide deformylase (202 aa).

The Fe cation site is built by Cys-121 and His-163. The active site involves Glu-164. His-167 serves as a coordination point for Fe cation.

It belongs to the polypeptide deformylase family. Requires Fe(2+) as cofactor.

It catalyses the reaction N-terminal N-formyl-L-methionyl-[peptide] + H2O = N-terminal L-methionyl-[peptide] + formate. Functionally, removes the formyl group from the N-terminal Met of newly synthesized proteins. Requires at least a dipeptide for an efficient rate of reaction. N-terminal L-methionine is a prerequisite for activity but the enzyme has broad specificity at other positions. The protein is Peptide deformylase of Synechococcus sp. (strain CC9311).